Here is a 238-residue protein sequence, read N- to C-terminus: Sugar fermentation stimulation protein homolog (238 aa).

The protein belongs to the SfsA family.

The protein is Sugar fermentation stimulation protein homolog of Vibrio vulnificus (strain CMCP6).